The sequence spans 486 residues: Serine/threonine-protein kinase 32C (486 aa).

A disordered region spans residues 1 to 56 (MRSGAERRGSSAAASPGSPPPGRARPAGSDAPSALPPPAAGQPRARDSGDVRSQPR). Phosphoserine occurs at positions 10, 15, and 18. The span at 24–33 (ARPAGSDAPS) shows a compositional bias: low complexity. Residues 93–353 (FQILRAIGKG…LQDVQAAPAL (261 aa)) form the Protein kinase domain. Residues 99-107 (IGKGSFGKV) and Lys122 each bind ATP. Catalysis depends on Asp216, which acts as the Proton acceptor. Residues 396–405 (HKKKKRLAKN) show a composition bias toward basic residues. Disordered stretches follow at residues 396–419 (HKKKKRLAKNKSRDNSRDSSQSEN) and 444–486 (SQDL…AGSG).

The protein belongs to the protein kinase superfamily. Ser/Thr protein kinase family. Mg(2+) serves as cofactor.

It carries out the reaction L-seryl-[protein] + ATP = O-phospho-L-seryl-[protein] + ADP + H(+). The catalysed reaction is L-threonyl-[protein] + ATP = O-phospho-L-threonyl-[protein] + ADP + H(+). In Homo sapiens (Human), this protein is Serine/threonine-protein kinase 32C.